The following is a 369-amino-acid chain: Phosphoribosyl pyrophosphate synthase-associated protein 2 (369 aa).

Methionine 1 is modified (N-acetylmethionine). Position 5 is a phosphothreonine (threonine 5). Residues serine 219, serine 227, and serine 233 each carry the phosphoserine modification.

It belongs to the ribose-phosphate pyrophosphokinase family. In terms of assembly, binds to PRPS1 and PRPS2. As to expression, ubiquitous.

Its function is as follows. Seems to play a negative regulatory role in 5-phosphoribose 1-diphosphate synthesis. This Homo sapiens (Human) protein is Phosphoribosyl pyrophosphate synthase-associated protein 2 (PRPSAP2).